A 435-amino-acid chain; its full sequence is Homogentisate 1,2-dioxygenase (435 aa).

The Proton acceptor role is filled by H289. The Fe cation site is built by H332 and E338. Y347 and H368 together coordinate homogentisate. Fe cation is bound at residue H368.

This sequence belongs to the homogentisate dioxygenase family. As to quaternary structure, hexamer; dimer of trimers. It depends on Fe cation as a cofactor.

It catalyses the reaction homogentisate + O2 = 4-maleylacetoacetate + H(+). Its pathway is amino-acid degradation; L-phenylalanine degradation; acetoacetate and fumarate from L-phenylalanine: step 4/6. In terms of biological role, involved in the catabolism of homogentisate (2,5-dihydroxyphenylacetate or 2,5-OH-PhAc), a central intermediate in the degradation of phenylalanine and tyrosine. Catalyzes the oxidative ring cleavage of the aromatic ring of homogentisate to yield maleylacetoacetate. The protein is Homogentisate 1,2-dioxygenase of Pseudomonas savastanoi pv. phaseolicola (strain 1448A / Race 6) (Pseudomonas syringae pv. phaseolicola (strain 1448A / Race 6)).